Here is a 160-residue protein sequence, read N- to C-terminus: 2-C-methyl-D-erythritol 2,4-cyclodiphosphate synthase (160 aa).

Residues Asp11 and His13 each coordinate a divalent metal cation. Residues 11–13 (DVH) and 37–38 (HS) each bind 4-CDP-2-C-methyl-D-erythritol 2-phosphate. Residue His45 participates in a divalent metal cation binding. 4-CDP-2-C-methyl-D-erythritol 2-phosphate-binding positions include 59–61 (DIG) and Arg145.

It belongs to the IspF family. As to quaternary structure, homotrimer. A divalent metal cation is required as a cofactor.

It carries out the reaction 4-CDP-2-C-methyl-D-erythritol 2-phosphate = 2-C-methyl-D-erythritol 2,4-cyclic diphosphate + CMP. Its pathway is isoprenoid biosynthesis; isopentenyl diphosphate biosynthesis via DXP pathway; isopentenyl diphosphate from 1-deoxy-D-xylulose 5-phosphate: step 4/6. Functionally, involved in the biosynthesis of isopentenyl diphosphate (IPP) and dimethylallyl diphosphate (DMAPP), two major building blocks of isoprenoid compounds. Catalyzes the conversion of 4-diphosphocytidyl-2-C-methyl-D-erythritol 2-phosphate (CDP-ME2P) to 2-C-methyl-D-erythritol 2,4-cyclodiphosphate (ME-CPP) with a corresponding release of cytidine 5-monophosphate (CMP). This is 2-C-methyl-D-erythritol 2,4-cyclodiphosphate synthase from Neisseria meningitidis serogroup A / serotype 4A (strain DSM 15465 / Z2491).